Consider the following 156-residue polypeptide: Transcription antitermination protein NusB (156 aa).

This sequence belongs to the NusB family.

Its function is as follows. Involved in transcription antitermination. Required for transcription of ribosomal RNA (rRNA) genes. Binds specifically to the boxA antiterminator sequence of the ribosomal RNA (rrn) operons. The chain is Transcription antitermination protein NusB from Mycolicibacterium paratuberculosis (strain ATCC BAA-968 / K-10) (Mycobacterium paratuberculosis).